Here is a 35-residue protein sequence, read N- to C-terminus: Photosystem II reaction center protein T (35 aa).

A helical membrane pass occupies residues 3 to 23 (ALVYTFLLVSTLGIIFFAIFF).

Belongs to the PsbT family. As to quaternary structure, PSII is composed of 1 copy each of membrane proteins PsbA, PsbB, PsbC, PsbD, PsbE, PsbF, PsbH, PsbI, PsbJ, PsbK, PsbL, PsbM, PsbT, PsbY, PsbZ, Psb30/Ycf12, at least 3 peripheral proteins of the oxygen-evolving complex and a large number of cofactors. It forms dimeric complexes.

The protein resides in the plastid. The protein localises to the chloroplast thylakoid membrane. Functionally, found at the monomer-monomer interface of the photosystem II (PS II) dimer, plays a role in assembly and dimerization of PSII. PSII is a light-driven water plastoquinone oxidoreductase, using light energy to abstract electrons from H(2)O, generating a proton gradient subsequently used for ATP formation. The chain is Photosystem II reaction center protein T from Citrus sinensis (Sweet orange).